A 355-amino-acid chain; its full sequence is Methylthioribose-1-phosphate isomerase (355 aa).

Substrate-binding positions include 47-49 (RGA), Arg90, and Gln197. Asp238 (proton donor) is an active-site residue. 248 to 249 (NK) contributes to the substrate binding site.

It belongs to the eIF-2B alpha/beta/delta subunits family. MtnA subfamily.

It carries out the reaction 5-(methylsulfanyl)-alpha-D-ribose 1-phosphate = 5-(methylsulfanyl)-D-ribulose 1-phosphate. The protein operates within amino-acid biosynthesis; L-methionine biosynthesis via salvage pathway; L-methionine from S-methyl-5-thio-alpha-D-ribose 1-phosphate: step 1/6. In terms of biological role, catalyzes the interconversion of methylthioribose-1-phosphate (MTR-1-P) into methylthioribulose-1-phosphate (MTRu-1-P). In Herpetosiphon aurantiacus (strain ATCC 23779 / DSM 785 / 114-95), this protein is Methylthioribose-1-phosphate isomerase.